Consider the following 196-residue polypeptide: MAALKALVSGCGRLLRGLLAGPAATSWSRLPARGFREVVETQEGKTTIIEGRITATPKESPNPPNPSGQCPICRWNLKHKYNYDDVLLLSQFIRPHGGMLPRKITGLCQEEHRKIEECVKMAHRAGLLPNHRPRLPEGVVPKSKPQLNRYLTRWAPGSVKPIYKKGPRWNRVRMPVGSPLLRDNVCYSRTPWKLYH.

The N-terminal 34 residues, M1–G34, are a transit peptide targeting the mitochondrion.

Belongs to the bacterial ribosomal protein bS18 family. Mitochondrion-specific ribosomal protein mL66 subfamily. In terms of assembly, component of the mitochondrial large ribosomal subunit (mt-LSU). Mature mammalian 55S mitochondrial ribosomes consist of a small (28S) and a large (39S) subunit. The 28S small subunit contains a 12S ribosomal RNA (12S mt-rRNA) and 30 different proteins. The 39S large subunit contains a 16S rRNA (16S mt-rRNA), a copy of mitochondrial valine transfer RNA (mt-tRNA(Val)), which plays an integral structural role, and 52 different proteins. mL66 forms a zinc-binding site with uL10m.

The protein localises to the mitochondrion. This chain is Large ribosomal subunit protein mL66 (MRPS18A), found in Homo sapiens (Human).